Consider the following 216-residue polypeptide: Uracil-DNA glycosylase (216 aa).

Asp59 (proton acceptor) is an active-site residue.

This sequence belongs to the uracil-DNA glycosylase (UDG) superfamily. UNG family.

It is found in the cytoplasm. It catalyses the reaction Hydrolyzes single-stranded DNA or mismatched double-stranded DNA and polynucleotides, releasing free uracil.. Functionally, excises uracil residues from the DNA which can arise as a result of misincorporation of dUMP residues by DNA polymerase or due to deamination of cytosine. This is Uracil-DNA glycosylase from Staphylococcus epidermidis (strain ATCC 35984 / DSM 28319 / BCRC 17069 / CCUG 31568 / BM 3577 / RP62A).